The chain runs to 146 residues: Small RNA-binding protein 11, chloroplastic (146 aa).

A chloroplast-targeting transit peptide spans 1–31; the sequence is MAALARIGGRHLKSVCLINSSASCFFTQRRG. The RRM domain maps to 34 to 112; that stretch reads SKLFIGGLSF…RTIFVDYAKA (79 aa). Ser42 carries the post-translational modification Phosphoserine.

In terms of tissue distribution, expressed in rosette leaves, cauline leaves, stems and flowers.

The protein localises to the plastid. It localises to the chloroplast. Functionally, probable RNA-binding protein that may be involved in salt and oxidative stress tolerance. The protein is Small RNA-binding protein 11, chloroplastic of Arabidopsis thaliana (Mouse-ear cress).